We begin with the raw amino-acid sequence, 229 residues long: MDPVQLLSFLLALLLPLGTALDASKQKRDTAFEIYKKLFEVKRKDQINALNNLIELNDVNQQYKIIDIMLKGLFKVLEDSRAILIAAGVQPDGPFPEDEKIKDAYSHTVENSAFFGDVVLRFPKIVHHYFDRNSNWNNLIRWGIGFCNLSGIFDDGPHTQLLGLMSQELGISEKSPDYKNPFKMDNMEFLPNTDAFQKALREEEKRRRKEEKRKEIRKGPRITRSRSEL.

The N-terminal stretch at 1-22 is a signal peptide; it reads MDPVQLLSFLLALLLPLGTALD. Positions 192 to 218 form a coiled coil; that stretch reads NTDAFQKALREEEKRRRKEEKRKEIRK. Residues 201-229 are disordered; the sequence is REEEKRRRKEEKRKEIRKGPRITRSRSEL. The segment covering 219-229 has biased composition (basic residues); it reads GPRITRSRSEL. The Prevents secretion from ER motif lies at 226–229; the sequence is RSEL.

The protein belongs to the CCDC134 family.

Its subcellular location is the endoplasmic reticulum lumen. In terms of biological role, molecular adapter required to prevent protein hyperglycosylation of HSP90B1: during translation, associates with nascent HSP90B1 and the STT3A catalytic component of the OST-A complex and tethers them to a specialized translocon that forms a microenvironment for HSP90B1 folding. In the CCDC134-containing translocon, STT3A associates with the SRT pseudosubstrate motif of HSP90B1, preventing access to facultative glycosylation sites until folding is completed, preventing hyperglycosylation and subsequent degradation of HSP90B1. This chain is Coiled-coil domain-containing protein 134 (ccdc134), found in Xenopus tropicalis (Western clawed frog).